The following is a 135-amino-acid chain: MACGLVASNLNLKPGECLRVRGEVAPDAKSFVLNLGKDSNNLCLHFNPRFNAHGDANTIVCNSKDGGAWGTEQREAVFPFQPGSVAEVCITFDQANLTVKLPDGYEFKFPNRLNLEAINYMAADGDFKIKCVAFD.

The residue at position 2 (alanine 2) is an N-acetylalanine. A Galectin domain is found at glycine 4–aspartate 135. An N6-acetyllysine mark is found at lysine 13 and lysine 29. Position 30 is a phosphoserine; by FAM20C (serine 30). Residues histidine 45–arginine 49, histidine 53, asparagine 62, and tryptophan 69–glutamate 72 contribute to the a beta-D-galactoside site. Residue lysine 108 is modified to N6-acetyllysine; alternate. The residue at position 108 (lysine 108) is an N6-succinyllysine; alternate. An N6-acetyllysine modification is found at lysine 128.

Homodimer. Binds LGALS3BP. Interacts with CD2, CD3, CD4, CD6, CD7, CD43, ALCAM and CD45. Interacts with laminin (via poly-N-acetyllactosamine). Interacts with SUSD2. Interacts with cargo receptor TMED10; the interaction mediates the translocation from the cytoplasm into the ERGIC (endoplasmic reticulum-Golgi intermediate compartment) and thereby secretion. Interacts with CD69. In terms of tissue distribution, expressed in placenta, maternal decidua and fetal membranes. Within placenta, expressed in trophoblasts, stromal cells, villous endothelium, syncytiotrophoblast apical membrane and villous stroma. Within fetal membranes, expressed in amnion, chorioamniotic mesenchyma and chorion (at protein level). Expressed in cardiac, smooth, and skeletal muscle, neurons, thymus, kidney and hematopoietic cells.

It is found in the secreted. The protein localises to the extracellular space. The protein resides in the extracellular matrix. It localises to the cytoplasm. Functionally, lectin that binds beta-galactoside and a wide array of complex carbohydrates. Plays a role in regulating apoptosis, cell proliferation and cell differentiation. Inhibits CD45 protein phosphatase activity and therefore the dephosphorylation of Lyn kinase. Strong inducer of T-cell apoptosis. Plays a negative role in Th17 cell differentiation via activation of the receptor CD69. The chain is Galectin-1 from Homo sapiens (Human).